Reading from the N-terminus, the 357-residue chain is uncharacterized protein (357 aa).

At serine 72 the chain carries Phosphoserine. Disordered regions lie at residues 79–98 (GVNE…RPSR), 264–290 (QKQL…GASV), and 323–357 (ISDE…EPLK). Residues 324–335 (SDEDEEDEEEDS) are compositionally biased toward acidic residues.

This is an uncharacterized protein from Saccharomyces cerevisiae (strain ATCC 204508 / S288c) (Baker's yeast).